A 720-amino-acid polypeptide reads, in one-letter code: Zinc finger protein 408 (720 aa).

The segment at 201 to 350 is disordered; that stretch reads VQQEVASPGE…GPAGSSPKQG (150 aa). Over residues 275–285 the composition is skewed to polar residues; sequence LQSNSATQQDP. Low complexity predominate over residues 287 to 296; it reads GSGASFSSSA. A Phosphothreonine modification is found at threonine 322. C2H2-type zinc fingers lie at residues 353–375, 381–403, 409–431, 437–459, 468–490, 496–518, 524–546, 551–573, 579–601, and 607–629; these read YRCG…AFVH, FLCT…MLGH, FPCP…QVVH, FACD…RKTH, CPCP…MRLH, FLCP…LRLH, YRCP…LISH, HLCP…ERLH, FPCP…LKSH, and YRCP…QLSH.

In terms of tissue distribution, highest expression is observed in adult retina; abundantly expressed in the fetal eye. In the retina, it is detected in the outer nuclear layer, especially cone and rod photoreceptor cells, ganglion cell layer and both outer and inner plexiform layers (at protein level). Expressed in retinal blood vessels (at protein level).

It is found in the nucleus. Its function is as follows. May be involved in transcriptional regulation. The sequence is that of Zinc finger protein 408 (ZNF408) from Homo sapiens (Human).